We begin with the raw amino-acid sequence, 182 residues long: Mesencephalic astrocyte-derived neurotrophic factor (182 aa).

The N-terminal stretch at 1 to 24 (MRRMWATQGLAVALALSVLPGSRA) is a signal peptide. Intrachain disulfides connect cysteine 30–cysteine 117, cysteine 33–cysteine 106, cysteine 64–cysteine 75, and cysteine 151–cysteine 154. Tyrosine 76 carries the phosphotyrosine modification. An interacts with ERN1, EIF2AK3 and ATF6 region spans residues 96 to 158 (LAHHIPVEKI…ETCKGCAEKS (63 aa)). The segment at 129–172 (TVDLKKLRVKELKKILDDWGETCKGCAEKSDYIRKINELMPKYA) is interacts with HSPA5.

This sequence belongs to the ARMET family. Interacts directly (via SAP domain) with HSPA5/BiP; the interaction inhibits ATP binding to HSPA5/BiP and subsequent nucleotide exchange. Component of a complex containing at least CRELD2, MANF, MATN3 and PDIA4. Interacts (via C-terminus) with ERN1 (via luminal domain); the interaction is decreased in the presence of increasing concentrations of Ca(2+). Post-translationally, may contain sialic acid residues.

The protein resides in the secreted. It is found in the endoplasmic reticulum lumen. It localises to the sarcoplasmic reticulum lumen. In terms of biological role, selectively promotes the survival of dopaminergic neurons of the ventral mid-brain. Modulates GABAergic transmission to the dopaminergic neurons of the substantia nigra. Enhances spontaneous, as well as evoked, GABAergic inhibitory postsynaptic currents in dopaminergic neurons. Inhibits cell proliferation and endoplasmic reticulum (ER) stress-induced cell death. Retained in the ER/sarcoplasmic reticulum (SR) through association with the endoplasmic reticulum chaperone protein HSPA5 under normal conditions. Stabilizes HSPA5/BiP in its substrate-bound ADP state, which facilitates HSPA5/BiP incorporation into chaperone-client complexes during endoplasmic reticulum stress, its interaction with HSPA5/BiP inhibits ATP binding to HSPA5/BiP and subsequent nucleotide exchange. As a result acts as a repressor of the unfolded protein response (UPR) pathway. Up-regulated and secreted by the ER/SR in response to ER stress and hypoxia. Following secretion by the ER/SR, directly binds to 3-O-sulfogalactosylceramide, a lipid sulfatide in the outer cell membrane of target cells. Sulfatide binding promotes its cellular uptake by endocytosis, and is required for its role in alleviating ER stress and cell toxicity under hypoxic and ER stress conditions. Essential for embryonic lung development. Required for the correct postnatal temporal and structural development of splenic white pulp. Required for the repair-associated myeloid response in skeletal muscle, acts as a regulator of phenotypic transition towards prorepair macrophages in response to muscle injury and as a result limits excessive proinflammatory signaling. Represses RELA expression and therefore NF-kB signaling in the myocardium, as a result limits macrophage infiltration of injured tissue and M1 macrophage differentiation in response to myocardial injury. Required for endochondral ossification in long bones and the skull during postnatal development. This Homo sapiens (Human) protein is Mesencephalic astrocyte-derived neurotrophic factor.